The following is a 301-amino-acid chain: N-acetylmuramic acid 6-phosphate etherase (301 aa).

Positions 55-215 constitute an SIS domain; it reads IADALRAGGR…STISMVALGK (161 aa). The active-site Proton donor is the glutamate 83. Glutamate 111 is a catalytic residue.

Belongs to the GCKR-like family. MurNAc-6-P etherase subfamily. As to quaternary structure, homodimer.

It carries out the reaction N-acetyl-D-muramate 6-phosphate + H2O = N-acetyl-D-glucosamine 6-phosphate + (R)-lactate. It participates in amino-sugar metabolism; 1,6-anhydro-N-acetylmuramate degradation. The protein operates within amino-sugar metabolism; N-acetylmuramate degradation. It functions in the pathway cell wall biogenesis; peptidoglycan recycling. In terms of biological role, specifically catalyzes the cleavage of the D-lactyl ether substituent of MurNAc 6-phosphate, producing GlcNAc 6-phosphate and D-lactate. Together with AnmK, is also required for the utilization of anhydro-N-acetylmuramic acid (anhMurNAc) either imported from the medium or derived from its own cell wall murein, and thus plays a role in cell wall recycling. This chain is N-acetylmuramic acid 6-phosphate etherase, found in Burkholderia lata (strain ATCC 17760 / DSM 23089 / LMG 22485 / NCIMB 9086 / R18194 / 383).